A 353-amino-acid polypeptide reads, in one-letter code: tRNA-specific 2-thiouridylase MnmA (353 aa).

Residues 6–13 (GMSGGVDS) and leucine 32 contribute to the ATP site. Catalysis depends on cysteine 99, which acts as the Nucleophile. An intrachain disulfide couples cysteine 99 to cysteine 197. Position 124 (glycine 124) interacts with ATP. Residues 147-149 (KDQ) are interaction with tRNA. The Cysteine persulfide intermediate role is filled by cysteine 197. Residues 303–304 (RY) are interaction with tRNA.

Belongs to the MnmA/TRMU family.

Its subcellular location is the cytoplasm. The enzyme catalyses S-sulfanyl-L-cysteinyl-[protein] + uridine(34) in tRNA + AH2 + ATP = 2-thiouridine(34) in tRNA + L-cysteinyl-[protein] + A + AMP + diphosphate + H(+). In terms of biological role, catalyzes the 2-thiolation of uridine at the wobble position (U34) of tRNA, leading to the formation of s(2)U34. This Persephonella marina (strain DSM 14350 / EX-H1) protein is tRNA-specific 2-thiouridylase MnmA.